A 323-amino-acid chain; its full sequence is Thiamine-monophosphate kinase (323 aa).

The Mg(2+) site is built by D30, S45, T46, and D47. Substrate is bound at residue H54. 2 residues coordinate Mg(2+): D75 and D122. ATP-binding positions include 121–122 (GD) and R146. D212 provides a ligand contact to Mg(2+). S214 contacts ATP. D215 serves as a coordination point for Mg(2+). 2 residues coordinate substrate: E263 and F319.

This sequence belongs to the thiamine-monophosphate kinase family.

The enzyme catalyses thiamine phosphate + ATP = thiamine diphosphate + ADP. The protein operates within cofactor biosynthesis; thiamine diphosphate biosynthesis; thiamine diphosphate from thiamine phosphate: step 1/1. In terms of biological role, catalyzes the ATP-dependent phosphorylation of thiamine-monophosphate (TMP) to form thiamine-pyrophosphate (TPP), the active form of vitamin B1. The protein is Thiamine-monophosphate kinase of Buchnera aphidicola subsp. Acyrthosiphon pisum (strain APS) (Acyrthosiphon pisum symbiotic bacterium).